The chain runs to 60 residues: uncharacterized protein (60 aa).

It to E.coli YjeQ and H.influenzae HI_1714.

This is an uncharacterized protein from Azotobacter vinelandii.